Reading from the N-terminus, the 986-residue chain is Translation initiation factor IF-2 (986 aa).

A disordered region spans residues 95–394 (TFVRRDETSA…GRGKHQDQNT (300 aa)). Over residues 122–182 (ELQRREEEAR…EEEAAKKRAA (61 aa)) the composition is skewed to basic and acidic residues. Residues 183 to 222 (AEAAAREQAQAAKPAQAAQPAAAKAEPVAAKAAEPAVAKQ) show a composition bias toward low complexity. The span at 228-277 (ERAAAERAAQREAAKKAEDAARQAAEKARAEQEQIAKRRAAAEAEARAIR) shows a compositional bias: basic and acidic residues. Positions 320–342 (APSRPAAKKPAAAAPAATTTPSA) are enriched in low complexity. A compositionally biased stretch (gly residues) spans 371–384 (TSGGVDRGWRGGPK). Residues 486 to 655 (PRPPVVTVMG…LLQAEVLELK (170 aa)) form the tr-type G domain. The tract at residues 495–502 (GHVDHGKT) is G1. 495–502 (GHVDHGKT) serves as a coordination point for GTP. The interval 520–524 (GITQH) is G2. The tract at residues 541–544 (DTPG) is G3. Residues 541-545 (DTPGH) and 595-598 (NKID) contribute to the GTP site. A G4 region spans residues 595–598 (NKID). The segment at 631 to 633 (SAK) is G5.

It belongs to the TRAFAC class translation factor GTPase superfamily. Classic translation factor GTPase family. IF-2 subfamily.

The protein localises to the cytoplasm. Its function is as follows. One of the essential components for the initiation of protein synthesis. Protects formylmethionyl-tRNA from spontaneous hydrolysis and promotes its binding to the 30S ribosomal subunits. Also involved in the hydrolysis of GTP during the formation of the 70S ribosomal complex. The sequence is that of Translation initiation factor IF-2 from Paraburkholderia phytofirmans (strain DSM 17436 / LMG 22146 / PsJN) (Burkholderia phytofirmans).